A 477-amino-acid polypeptide reads, in one-letter code: MTPPLPGFRDVRVVVAGDLMLDRYWHGATQRISPEAPVPVVRVDGAEERPGGAANVALNVAALGGEAQVVGPTGSDEAADRLAELLEAAGVGQRFHRIAGADTITKLRVISRHQQLIRLDFERGFPGFDHAAMLALLEPALADAAVLVLSDYAKGALPDPAGLIEAARRAGRPVLVDPKGADYRRYRGASLLTPNLAEFEAVVGPCADGDEIAKRARQLAADLELEALLVTRGEAGMTLAPREGVAVHLPTRAREVFDVTGAGDTVIATLAAALGAGVDLADASALANVAAGVVVGKLGTATVTPAELEAALGGGPAPAAGSGVVDEPGLLAAVRQARAAGERIVMTNGCFDLLHAGHVDYLQRARRRGERLVVAVNDDASVARLKGAERPVTPLAQRMAVLAALDTVDWVVPFSEDTPARLIEAVLPDRLVKGGDYQPEQIAGHDVVVAAGGSVEVLPLLAGASTTDLIARIRSRG.

The segment at 1 to 319 is ribokinase; the sequence is MTPPLPGFRD…AALGGGPAPA (319 aa). 195–198 contacts ATP; sequence NLAE. The active site involves aspartate 264. A cytidylyltransferase region spans residues 346 to 477; it reads MTNGCFDLLH…DLIARIRSRG (132 aa).

The protein in the N-terminal section; belongs to the carbohydrate kinase PfkB family. It in the C-terminal section; belongs to the cytidylyltransferase family. As to quaternary structure, homodimer.

The catalysed reaction is D-glycero-beta-D-manno-heptose 7-phosphate + ATP = D-glycero-beta-D-manno-heptose 1,7-bisphosphate + ADP + H(+). It catalyses the reaction D-glycero-beta-D-manno-heptose 1-phosphate + ATP + H(+) = ADP-D-glycero-beta-D-manno-heptose + diphosphate. Its pathway is nucleotide-sugar biosynthesis; ADP-L-glycero-beta-D-manno-heptose biosynthesis; ADP-L-glycero-beta-D-manno-heptose from D-glycero-beta-D-manno-heptose 7-phosphate: step 1/4. It participates in nucleotide-sugar biosynthesis; ADP-L-glycero-beta-D-manno-heptose biosynthesis; ADP-L-glycero-beta-D-manno-heptose from D-glycero-beta-D-manno-heptose 7-phosphate: step 3/4. Functionally, catalyzes the phosphorylation of D-glycero-D-manno-heptose 7-phosphate at the C-1 position to selectively form D-glycero-beta-D-manno-heptose-1,7-bisphosphate. In terms of biological role, catalyzes the ADP transfer from ATP to D-glycero-beta-D-manno-heptose 1-phosphate, yielding ADP-D-glycero-beta-D-manno-heptose. The sequence is that of Bifunctional protein HldE from Halorhodospira halophila (strain DSM 244 / SL1) (Ectothiorhodospira halophila (strain DSM 244 / SL1)).